The sequence spans 121 residues: Acidic phospholipase A2 SpII RP4 (121 aa).

7 cysteine pairs are disulfide-bonded: cysteine 25/cysteine 114, cysteine 27/cysteine 43, cysteine 42/cysteine 94, cysteine 48/cysteine 121, cysteine 49/cysteine 87, cysteine 56/cysteine 80, and cysteine 74/cysteine 85. Tyrosine 26, glycine 28, and glycine 30 together coordinate Ca(2+). The active site involves histidine 46. Aspartate 47 contacts Ca(2+). Aspartate 88 is an active-site residue.

The cofactor is Ca(2+). In terms of tissue distribution, expressed by the venom gland.

Its subcellular location is the secreted. It carries out the reaction a 1,2-diacyl-sn-glycero-3-phosphocholine + H2O = a 1-acyl-sn-glycero-3-phosphocholine + a fatty acid + H(+). Its function is as follows. Snake venom phospholipase A2 (PLA2) which exhibits indirect hemolysis, induces mild edema inflammation in the foot pads of mice and slightly delays anticoagulant activities. In mice, not lethal, even at the highest dose, and exhibits low to moderate myotoxicity on muscular fibers. PLA2 catalyzes the calcium-dependent hydrolysis of the 2-acyl groups in 3-sn-phosphoglycerides. In Bothrops alternatus (Urutu), this protein is Acidic phospholipase A2 SpII RP4.